We begin with the raw amino-acid sequence, 77 residues long: Small ribosomal subunit protein uS17 (77 aa).

It belongs to the universal ribosomal protein uS17 family. In terms of assembly, part of the 30S ribosomal subunit.

Functionally, one of the primary rRNA binding proteins, it binds specifically to the 5'-end of 16S ribosomal RNA. The polypeptide is Small ribosomal subunit protein uS17 (Rickettsia prowazekii (strain Madrid E)).